A 1050-amino-acid chain; its full sequence is NAD-specific glutamate dehydrogenase (1050 aa).

The tract at residues 1 to 39 (MDSPSAPVPAHKLVDRLKDQTPRHPSPQPTHVSYPKVNG) is disordered. Positions 12-22 (KLVDRLKDQTP) are enriched in basic and acidic residues. The active site involves K594.

The protein belongs to the Glu/Leu/Phe/Val dehydrogenases family. Homotetramer.

The catalysed reaction is L-glutamate + NAD(+) + H2O = 2-oxoglutarate + NH4(+) + NADH + H(+). In Neurospora crassa (strain ATCC 24698 / 74-OR23-1A / CBS 708.71 / DSM 1257 / FGSC 987), this protein is NAD-specific glutamate dehydrogenase (gdh-1).